We begin with the raw amino-acid sequence, 139 residues long: Transcription antitermination protein NusB (139 aa).

This sequence belongs to the NusB family.

Its function is as follows. Involved in transcription antitermination. Required for transcription of ribosomal RNA (rRNA) genes. Binds specifically to the boxA antiterminator sequence of the ribosomal RNA (rrn) operons. This Natranaerobius thermophilus (strain ATCC BAA-1301 / DSM 18059 / JW/NM-WN-LF) protein is Transcription antitermination protein NusB.